The following is a 220-amino-acid chain: Lipoprotein-releasing system ATP-binding protein LolD (220 aa).

In terms of domain architecture, ABC transporter spans 1 to 220 (MRAVDIHKSY…YRMKDGQWQS (220 aa)). 37 to 44 (GASGAGKS) contributes to the ATP binding site.

Belongs to the ABC transporter superfamily. Lipoprotein translocase (TC 3.A.1.125) family. In terms of assembly, the complex is composed of two ATP-binding proteins (LolD) and two transmembrane proteins (LolC and LolE).

The protein resides in the cell inner membrane. Part of the ABC transporter complex LolCDE involved in the translocation of mature outer membrane-directed lipoproteins, from the inner membrane to the periplasmic chaperone, LolA. Responsible for the formation of the LolA-lipoprotein complex in an ATP-dependent manner. The polypeptide is Lipoprotein-releasing system ATP-binding protein LolD (Bdellovibrio bacteriovorus (strain ATCC 15356 / DSM 50701 / NCIMB 9529 / HD100)).